Here is a 180-residue protein sequence, read N- to C-terminus: Large ribosomal subunit protein uL6 (180 aa).

The protein belongs to the universal ribosomal protein uL6 family. Part of the 50S ribosomal subunit.

This protein binds to the 23S rRNA, and is important in its secondary structure. It is located near the subunit interface in the base of the L7/L12 stalk, and near the tRNA binding site of the peptidyltransferase center. In Anaeromyxobacter sp. (strain K), this protein is Large ribosomal subunit protein uL6.